Consider the following 861-residue polypeptide: Alpha-actinin A (861 aa).

The interval 1-239 is actin-binding; sequence MSEEPTPVSG…VMTYVAQYYH (239 aa). 2 Calponin-homology (CH) domains span residues 22–127 and 136–242; these read ITQK…LRFA and LSAK…HHFS. 4 Spectrin repeats span residues 240–365, 366–480, 481–601, and 602–714; these read HFSA…ALEK, AEQE…TGVK, SSAE…EERK, and VQLA…EQVV. EF-hand domains are found at residues 729–764 and 765–800; these read EELSEFKACFSHFDKDNDNKLNRLEFSSCLKSIGDE and LTEEQLNQVISKIDTDGNGTISFEEFIDYMVSSRKG. Ca(2+)-binding residues include aspartate 742, aspartate 744, aspartate 746, lysine 748, glutamate 753, aspartate 778, aspartate 780, asparagine 782, threonine 784, and glutamate 789.

It belongs to the alpha-actinin family. In terms of assembly, homodimer; antiparallel.

The protein resides in the cytoplasm. It localises to the cell cortex. It is found in the contractile vacuole. Its subcellular location is the cytoplasmic vesicle. The protein localises to the phagosome. In terms of biological role, F-actin cross-linking protein which is thought to anchor actin to a variety of intracellular structures. This is a bundling protein. Increases the actin-stimulated ATPase activity of myosin. Involved in vegetative cell growth, phagocytosis, motility and development, probably through stabilization of the actin network in the cortical cytoskeleton. This is Alpha-actinin A (abpA) from Dictyostelium discoideum (Social amoeba).